A 529-amino-acid polypeptide reads, in one-letter code: Low affinity inorganic phosphate transporter 5 (529 aa).

Topologically, residues 1-21 (MASNNLNVLNALDTAHTQWYH) are cytoplasmic. Residues 22-42 (VTAVVIAGMGFFTDAYDLFCI) traverse the membrane as a helical segment. Residues 43–71 (STISKLLGRLYYYDPHTHAPGKLPHTVNN) are Extracellular-facing. A helical transmembrane segment spans residues 72 to 92 (WVTGVALVGTLTGQLVFGWLG). Residues 93 to 99 (DKLGRKK) are Cytoplasmic-facing. Residues 100 to 120 (VYGLTLILMVICALSSGLSFG) form a helical membrane-spanning segment. The Extracellular segment spans residues 121–124 (YSRK). A helical transmembrane segment spans residues 125–145 (VVIGTLCFFRFWLGFGIGGDY). Residues 146-163 (PLSATIMSEYANKRTRGA) are Cytoplasmic-facing. The chain crosses the membrane as a helical span at residues 164-184 (FIAAVFAMQGVGIIFAGLVLM). At 185-211 (TVSKVFLMRYAGKAFSTDEVFSTEPEA) the chain is on the extracellular side. A helical membrane pass occupies residues 212 to 232 (DYVWRIVLMLGALPALLTYYW). At 233–291 (RMKMPETGRYTAIIEGNAKQAAIDMGKVLEIEIQAEGEKLAKFKSANDYSLLSNEFFQR) the chain is on the cytoplasmic side. The chain crosses the membrane as a helical span at residues 292 to 312 (HGLHLIGTMSTWFLLDIAFYS). Residues 313 to 344 (QNLTQKDIFPTMGLVSDAKSISALREMFETSR) lie on the Extracellular side of the membrane. A glycan (N-linked (GlcNAc...) asparagine) is linked at Asn-314. A helical membrane pass occupies residues 345–365 (AMFVIALLGTFPGYWFTVFFI). Residues 366–374 (EKIGRFKIQ) are Cytoplasmic-facing. A helical transmembrane segment spans residues 375-395 (LMGFFMMSIFMAIIGVRYDYL). The Extracellular portion of the chain corresponds to 396-405 (KTKDHKWTFA). The chain crosses the membrane as a helical span at residues 406-426 (ALYGLTFFFANSGPNSTTFVL). Topologically, residues 427 to 472 (PAELFPTRVRSTCHALSAASGKAGAMVSAFGVQQYTQDGEVHKIKK) are cytoplasmic. Residues 473–493 (AMLFLAFTNMVGFCCTFLVTE) traverse the membrane as a helical segment. The Extracellular segment spans residues 494-529 (TKGRSLEEISGEDENQNETKMKGRPVSGGHQDDGWD). The segment at 500-529 (EEISGEDENQNETKMKGRPVSGGHQDDGWD) is disordered. N-linked (GlcNAc...) asparagine glycosylation occurs at Asn-510.

The protein belongs to the major facilitator superfamily. Phosphate:H(+) symporter (TC 2.A.1.9) family. Expressed at low levels in non-mycorrhized roots.

The protein localises to the cell membrane. It catalyses the reaction phosphate(in) + H(+)(in) = phosphate(out) + H(+)(out). In terms of biological role, low-affinity transporter for external inorganic phosphate (Pi) probably involved in the acquisition of phosphate released by arbuscular mycorrhizal (AM) fungi during AM symbiosis. The sequence is that of Low affinity inorganic phosphate transporter 5 from Petunia hybrida (Petunia).